A 403-amino-acid chain; its full sequence is Large ribosomal subunit protein uL3 (403 aa).

Positions 1 to 37 (MSHRKFSAPRHGSLGFLPRKRSSRHRGKVKSFPKDDP) are disordered. Ser13 bears the Phosphoserine mark. Positions 18–31 (PRKRSSRHRGKVKS) are enriched in basic residues. Lys39 participates in a covalent cross-link: Glycyl lysine isopeptide (Lys-Gly) (interchain with G-Cter in SUMO2). N6-acetyllysine is present on Lys136. Residues Lys224 and Lys226 each participate in a glycyl lysine isopeptide (Lys-Gly) (interchain with G-Cter in SUMO2) cross-link. His245 carries the tele-methylhistidine modification. N6-acetyllysine; alternate occurs at positions 286 and 294. Lys286 participates in a covalent cross-link: Glycyl lysine isopeptide (Lys-Gly) (interchain with G-Cter in SUMO2); alternate. Lys294 participates in a covalent cross-link: Glycyl lysine isopeptide (Lys-Gly) (interchain with G-Cter in SUMO1); alternate. Ser304 bears the Phosphoserine mark. Lys366 is modified (N6-acetyllysine; alternate). A Glycyl lysine isopeptide (Lys-Gly) (interchain with G-Cter in SUMO2); alternate cross-link involves residue Lys366. Lys373 carries the N6-acetyllysine modification. Glycyl lysine isopeptide (Lys-Gly) (interchain with G-Cter in SUMO2) cross-links involve residues Lys386, Lys393, and Lys399.

The protein belongs to the universal ribosomal protein uL3 family. Component of the large ribosomal subunit. Interacts with DHX33. In terms of processing, constitutively monomethylated at His-245 by METTL18. Methylation at His-245 regulates translation elongation by slowing ribosome traversal on tyrosine codons: slower elongation provides enough time for proper folding of synthesized proteins and prevents cellular aggregation of tyrosine-rich proteins. It is not required for incorporation of RPL3 into ribosomes.

It is found in the nucleus. Its subcellular location is the nucleolus. The protein localises to the cytoplasm. Functionally, component of the large ribosomal subunit. The ribosome is a large ribonucleoprotein complex responsible for the synthesis of proteins in the cell. The polypeptide is Large ribosomal subunit protein uL3 (RPL3) (Homo sapiens (Human)).